The primary structure comprises 450 residues: Perilipin-2 (450 aa).

Ala2 carries the post-translational modification N-acetylalanine. A Phosphoserine modification is found at Ser215. Tyr232 is modified (phosphotyrosine). The segment at 411–450 is disordered; the sequence is ESESAQAPGTTRRPGRWSRKHPKPVPVSNAEGSQPDDSSS. Basic residues predominate over residues 423–433; sequence RPGRWSRKHPK. Polar residues predominate over residues 440 to 450; the sequence is AEGSQPDDSSS.

It belongs to the perilipin family. As to quaternary structure, interacts with IRGC. Post-translationally, acylated; primarily with C14, C16 and C18 fatty acids. In terms of processing, phosphorylation at Tyr-232 by isoform 1 of CHKA (CHKalpha2) promotes dissociation from lipid droplets: dissociation is followed by recruitment of autophagosome machinery to lipid droplets and subsequent lipid droplet lipolysis. Polyubiquitination of Nt-acetylatable A-PLIN2 by MARCHF6 lead to degradation by 26S proteasomes. Milk lipid globules.

Its subcellular location is the membrane. It is found in the lipid droplet. Structural component of lipid droplets, which is required for the formation and maintenance of lipid storage droplets. This chain is Perilipin-2 (PLIN2), found in Bos taurus (Bovine).